A 751-amino-acid chain; its full sequence is Catalase-peroxidase (751 aa).

Residues 92–240 (WHSAGTYRVT…VAAAHMGLIY (149 aa)) constitute a cross-link (tryptophyl-tyrosyl-methioninium (Trp-Tyr) (with M-266)). Residue histidine 93 is the Proton acceptor of the active site. Positions 240 to 266 (YVNPEGPDGVPDPIAAARDIRTTFHRM) form a cross-link, tryptophyl-tyrosyl-methioninium (Tyr-Met) (with W-92). Histidine 281 is a heme b binding site.

The protein belongs to the peroxidase family. Peroxidase/catalase subfamily. As to quaternary structure, homodimer or homotetramer. Heme b is required as a cofactor. Post-translationally, formation of the three residue Trp-Tyr-Met cross-link is important for the catalase, but not the peroxidase activity of the enzyme.

The protein localises to the cytoplasm. The catalysed reaction is H2O2 + AH2 = A + 2 H2O. It carries out the reaction 2 H2O2 = O2 + 2 H2O. Functionally, bifunctional enzyme with both catalase and broad-spectrum peroxidase activity. The protein is Catalase-peroxidase of Phaeosphaeria nodorum (strain SN15 / ATCC MYA-4574 / FGSC 10173) (Glume blotch fungus).